A 238-amino-acid chain; its full sequence is 5-amino-6-(5-phospho-D-ribitylamino)uracil phosphatase YigB (238 aa).

Catalysis depends on D16, which acts as the Nucleophile. 3 residues coordinate Mg(2+): D16, D18, and D188. 16-18 (DLD) is a substrate binding site.

This sequence belongs to the HAD-like hydrolase superfamily. Requires Mg(2+) as cofactor. Mn(2+) is required as a cofactor. Co(2+) serves as cofactor. It depends on Zn(2+) as a cofactor.

It carries out the reaction 5-amino-6-(5-phospho-D-ribitylamino)uracil + H2O = 5-amino-6-(D-ribitylamino)uracil + phosphate. The protein operates within cofactor biosynthesis; riboflavin biosynthesis; 5-amino-6-(D-ribitylamino)uracil from GTP: step 4/4. Functionally, catalyzes the dephosphorylation of 5-amino-6-(5-phospho-D-ribitylamino)uracil, and thus could be involved in the riboflavin biosynthesis pathway. Is also able to dephosphorylate flavin mononucleotide (FMN) and other phosphoric acid esters. YigB is important for the formation of dormant persister cells. This chain is 5-amino-6-(5-phospho-D-ribitylamino)uracil phosphatase YigB (yigB), found in Escherichia coli (strain K12).